We begin with the raw amino-acid sequence, 216 residues long: Protein-L-isoaspartate O-methyltransferase (216 aa).

The active site involves S60.

It belongs to the methyltransferase superfamily. L-isoaspartyl/D-aspartyl protein methyltransferase family.

It localises to the cytoplasm. The enzyme catalyses [protein]-L-isoaspartate + S-adenosyl-L-methionine = [protein]-L-isoaspartate alpha-methyl ester + S-adenosyl-L-homocysteine. Its function is as follows. Catalyzes the methyl esterification of L-isoaspartyl residues in peptides and proteins that result from spontaneous decomposition of normal L-aspartyl and L-asparaginyl residues. It plays a role in the repair and/or degradation of damaged proteins. The protein is Protein-L-isoaspartate O-methyltransferase of Methanococcus aeolicus (strain ATCC BAA-1280 / DSM 17508 / OCM 812 / Nankai-3).